Here is a 274-residue protein sequence, read N- to C-terminus: Large ribosomal subunit protein uL2 (274 aa).

Disordered stretches follow at residues 34–53 (IAPIKNSGGRNSQGKMTMRY) and 216–274 (RRPR…RRKK).

This sequence belongs to the universal ribosomal protein uL2 family. As to quaternary structure, part of the 50S ribosomal subunit. Forms a bridge to the 30S subunit in the 70S ribosome.

One of the primary rRNA binding proteins. Required for association of the 30S and 50S subunits to form the 70S ribosome, for tRNA binding and peptide bond formation. It has been suggested to have peptidyltransferase activity; this is somewhat controversial. Makes several contacts with the 16S rRNA in the 70S ribosome. The chain is Large ribosomal subunit protein uL2 from Flavobacterium psychrophilum (strain ATCC 49511 / DSM 21280 / CIP 103535 / JIP02/86).